The chain runs to 245 residues: Biosynthetic peptidoglycan transglycosylase (245 aa).

The helical transmembrane segment at 20–42 (VYAGSVFAGAWLATQLFYLAQIA) threads the bilayer.

Belongs to the glycosyltransferase 51 family.

The protein localises to the cell inner membrane. The enzyme catalyses [GlcNAc-(1-&gt;4)-Mur2Ac(oyl-L-Ala-gamma-D-Glu-L-Lys-D-Ala-D-Ala)](n)-di-trans,octa-cis-undecaprenyl diphosphate + beta-D-GlcNAc-(1-&gt;4)-Mur2Ac(oyl-L-Ala-gamma-D-Glu-L-Lys-D-Ala-D-Ala)-di-trans,octa-cis-undecaprenyl diphosphate = [GlcNAc-(1-&gt;4)-Mur2Ac(oyl-L-Ala-gamma-D-Glu-L-Lys-D-Ala-D-Ala)](n+1)-di-trans,octa-cis-undecaprenyl diphosphate + di-trans,octa-cis-undecaprenyl diphosphate + H(+). Its pathway is cell wall biogenesis; peptidoglycan biosynthesis. Functionally, peptidoglycan polymerase that catalyzes glycan chain elongation from lipid-linked precursors. The sequence is that of Biosynthetic peptidoglycan transglycosylase from Burkholderia cenocepacia (strain HI2424).